The primary structure comprises 362 residues: 3-isopropylmalate dehydrogenase (362 aa).

77–88 contacts NAD(+); it reads GPKWGTGSVRPE. Positions 95, 105, 134, and 223 each coordinate substrate. The Mg(2+) site is built by D223, D248, and D252. Position 287–298 (287–298) interacts with NAD(+); that stretch reads GSAPDLPKGKVN.

This sequence belongs to the isocitrate and isopropylmalate dehydrogenases family. Homodimer. The cofactor is Mg(2+). Mn(2+) serves as cofactor.

Its subcellular location is the cytoplasm. It catalyses the reaction (2R,3S)-3-isopropylmalate + NAD(+) = 4-methyl-2-oxopentanoate + CO2 + NADH. The protein operates within amino-acid biosynthesis; L-leucine biosynthesis; L-leucine from 3-methyl-2-oxobutanoate: step 3/4. Its function is as follows. Catalyzes the oxidation of 3-carboxy-2-hydroxy-4-methylpentanoate (3-isopropylmalate) to 3-carboxy-4-methyl-2-oxopentanoate. The product decarboxylates to 4-methyl-2 oxopentanoate. In Zygosaccharomyces rouxii (strain ATCC 2623 / CBS 732 / NBRC 1130 / NCYC 568 / NRRL Y-229), this protein is 3-isopropylmalate dehydrogenase (LEU2).